The primary structure comprises 124 residues: MANKSAEHSHFPWKHIVGFALSIVLTLLALWVAVYTDLSSSAKLWIIFGFAFIQAALQLLMFMHMTESENGGIQVGNTLFGFFGAIVIVLGSIWIFAAHYHHGDHMDGNPPGGAEHSEHSGHNE.

3 helical membrane-spanning segments follow: residues 16–36 (IVGF…AVYT), 44–64 (LWII…MFMH), and 78–98 (TLFG…IFAA).

The protein belongs to the cytochrome c oxidase bacterial subunit 4 family.

It is found in the cell membrane. The enzyme catalyses 2 a quinol + O2 = 2 a quinone + 2 H2O. Functionally, catalyzes quinol oxidation with the concomitant reduction of oxygen to water. Major component for energy conversion during vegetative growth. The sequence is that of Quinol oxidase subunit 4 (qoxD) from Bacillus spizizenii (strain ATCC 23059 / NRRL B-14472 / W23) (Bacillus subtilis subsp. spizizenii).